A 161-amino-acid polypeptide reads, in one-letter code: Allophycocyanin alpha chain (161 aa).

Position 71 is an N4-methylasparagine (asparagine 71). A (2R,3E)-phycocyanobilin-binding site is contributed by cysteine 81.

This sequence belongs to the phycobiliprotein family. In terms of assembly, heterodimer of an alpha and a beta chain. Contains one covalently linked phycocyanobilin chromophore.

It is found in the plastid. The protein localises to the chloroplast thylakoid membrane. In terms of biological role, light-harvesting photosynthetic bile pigment-protein from the phycobiliprotein complex. Allophycocyanin has a maximum absorption at approximately 650 nanometers. The protein is Allophycocyanin alpha chain (apcA) of Galdieria sulphuraria (Red alga).